A 145-amino-acid polypeptide reads, in one-letter code: Large ribosomal subunit protein uL13 (145 aa).

The protein belongs to the universal ribosomal protein uL13 family. Part of the 50S ribosomal subunit.

Its function is as follows. This protein is one of the early assembly proteins of the 50S ribosomal subunit, although it is not seen to bind rRNA by itself. It is important during the early stages of 50S assembly. The polypeptide is Large ribosomal subunit protein uL13 (Bacillus licheniformis (strain ATCC 14580 / DSM 13 / JCM 2505 / CCUG 7422 / NBRC 12200 / NCIMB 9375 / NCTC 10341 / NRRL NRS-1264 / Gibson 46)).